The following is a 138-amino-acid chain: Nucleoside diphosphate kinase (138 aa).

Lys9, Phe57, Arg85, Thr91, Arg102, and Asn112 together coordinate ATP. Catalysis depends on His115, which acts as the Pros-phosphohistidine intermediate.

Belongs to the NDK family. Homotetramer. Mg(2+) serves as cofactor.

Its subcellular location is the cytoplasm. It catalyses the reaction a 2'-deoxyribonucleoside 5'-diphosphate + ATP = a 2'-deoxyribonucleoside 5'-triphosphate + ADP. The catalysed reaction is a ribonucleoside 5'-diphosphate + ATP = a ribonucleoside 5'-triphosphate + ADP. Major role in the synthesis of nucleoside triphosphates other than ATP. The ATP gamma phosphate is transferred to the NDP beta phosphate via a ping-pong mechanism, using a phosphorylated active-site intermediate. This chain is Nucleoside diphosphate kinase, found in Deinococcus geothermalis (strain DSM 11300 / CIP 105573 / AG-3a).